The chain runs to 701 residues: MLLPENMVRLQIISDKSAIDPIITKLLKLGMFQPEDPLYPLGNERIEDARRLITAVQDHVSKLKIIMELGGLVIEPLGSIKVSSWIKAAQDVSEEASKLEERYKELLEEIGRLRSEKDLYQQQLKELEPIKSITVELSKLYSLELFDVILAQVDEDKLRLINQIIGDSNFVYYTRFGEERYIVLIIAEKNINVDKKLREAGVRRYELQEGKSPFQLYNEILERINQINIILERTREELAKKVKTEENYIKNVYGKLLTVRDALNIMNKARVSEYYLQIEGYFPEKHVKKVQNEINNLAFMDYIRPRRYGEKEEPPTLVELPKSIKVLESLVEIYGSPSYWEISPIVFLVFTFPILFGLMFPDFGNALVLLLFSIWFYRYGKKRGSENIPKLSIILIYSSIVAIITGLLARDFFGPLPVGGLREILNNGNYSAGPLYNLWPIPASVSEAIKFLLPFGEYSTSVSIENTMIFSVLLGALALFVSSLLGVIDAIRKKDPEFLFLEKLPLFLLYVVPIFIFMYGITDPANFFTVDQQILGQILNAVLMKSFSENIVGYGIVWWTSFALLYNWAAHAILVKRHDNATWGSAIAMGFIEGGFEGALLLLSNTISFIRVLVFALSHYYILYAFSYMAYLVAPSTTTIGVLINPIAIIILIIGNLLAIGLEGLVVFIQDLRLHFYEMFSKFYEGRGRKFEPVMAYVSLE.

A run of 10 helical transmembrane segments spans residues 340-360 (WEIS…GLMF), 363-379 (FGNA…FYRY), 388-408 (IPKL…TGLL), 435-455 (LYNL…LLPF), 468-488 (MIFS…LGVI), 498-518 (FLFL…FIFM), 555-575 (GIVW…AILV), 583-603 (WGSA…LLLL), 612-632 (VLVF…MAYL), and 649-669 (IIIL…VVFI).

It belongs to the V-ATPase 116 kDa subunit family. Has multiple subunits with at least A(3), B(3), C, D, E, F, H, I and proteolipid K(x).

The protein localises to the cell membrane. In terms of biological role, component of the A-type ATP synthase that produces ATP from ADP in the presence of a proton gradient across the membrane. The polypeptide is A-type ATP synthase subunit I (Saccharolobus solfataricus (strain ATCC 35092 / DSM 1617 / JCM 11322 / P2) (Sulfolobus solfataricus)).